The following is a 362-amino-acid chain: Chorismate synthase (362 aa).

Residue R47 participates in NADP(+) binding. FMN contacts are provided by residues 124–126, G286, 301–305, and R327; these read RAS and KPTAT.

Belongs to the chorismate synthase family. Homotetramer. It depends on FMNH2 as a cofactor.

It carries out the reaction 5-O-(1-carboxyvinyl)-3-phosphoshikimate = chorismate + phosphate. It participates in metabolic intermediate biosynthesis; chorismate biosynthesis; chorismate from D-erythrose 4-phosphate and phosphoenolpyruvate: step 7/7. Its function is as follows. Catalyzes the anti-1,4-elimination of the C-3 phosphate and the C-6 proR hydrogen from 5-enolpyruvylshikimate-3-phosphate (EPSP) to yield chorismate, which is the branch point compound that serves as the starting substrate for the three terminal pathways of aromatic amino acid biosynthesis. This reaction introduces a second double bond into the aromatic ring system. In Prochlorococcus marinus (strain SARG / CCMP1375 / SS120), this protein is Chorismate synthase.